A 114-amino-acid chain; its full sequence is Phycoerythrin alpha-1 subunit (114 aa).

Residues Asp-52, Ser-53, Glu-63, Arg-64, Cys-67, Thr-72, Lys-74, Ala-75, and Lys-84 each contribute to the (2R,3E)-phycoerythrobilin site.

This sequence belongs to the phycoerythrin family. As to quaternary structure, heterotetramer of 2 different alpha chains and 2 identical beta chains which form 2 alpha-beta heterodimers within the heterotetramer. The two alpha-beta heterodimers are rotated to an open configuration in contrast to the closed configuration found in other cryptophyte species due to the insertion of a single amino acid, Asp-65, in a conserved region of the alpha chain. In the open form, the central chromophores are not in physical contact but are separated by a water-filled channel. Post-translationally, contains three phycoerythrobilin chromophores with binding mediated by both the alpha and beta subunits.

It localises to the plastid. The protein resides in the chloroplast thylakoid membrane. Its function is as follows. Light-harvesting photosynthetic tetrapyrrole chromophore-protein from the phycobiliprotein complex. This Hemiselmis andersenii (Cryptophyte alga) protein is Phycoerythrin alpha-1 subunit.